The following is a 431-amino-acid chain: Serine hydroxymethyltransferase (431 aa).

Residues L128 and 132–134 each bind (6S)-5,6,7,8-tetrahydrofolate; that span reads GHL. K237 bears the N6-(pyridoxal phosphate)lysine mark. Residue E253 participates in (6S)-5,6,7,8-tetrahydrofolate binding.

This sequence belongs to the SHMT family. In terms of assembly, homodimer. Pyridoxal 5'-phosphate serves as cofactor.

It is found in the cytoplasm. It catalyses the reaction (6R)-5,10-methylene-5,6,7,8-tetrahydrofolate + glycine + H2O = (6S)-5,6,7,8-tetrahydrofolate + L-serine. Its pathway is one-carbon metabolism; tetrahydrofolate interconversion. It participates in amino-acid biosynthesis; glycine biosynthesis; glycine from L-serine: step 1/1. Functionally, catalyzes the reversible interconversion of serine and glycine with tetrahydrofolate (THF) serving as the one-carbon carrier. This reaction serves as the major source of one-carbon groups required for the biosynthesis of purines, thymidylate, methionine, and other important biomolecules. Also exhibits THF-independent aldolase activity toward beta-hydroxyamino acids, producing glycine and aldehydes, via a retro-aldol mechanism. The sequence is that of Serine hydroxymethyltransferase from Cereibacter sphaeroides (strain ATCC 17023 / DSM 158 / JCM 6121 / CCUG 31486 / LMG 2827 / NBRC 12203 / NCIMB 8253 / ATH 2.4.1.) (Rhodobacter sphaeroides).